The following is a 473-amino-acid chain: Photosystem II CP43 reaction center protein (473 aa).

Residues 1–14 (MKTLYSLRRFYHVE) constitute a propeptide that is removed on maturation. Threonine 15 is subject to N-acetylthreonine. Phosphothreonine is present on threonine 15. The next 5 membrane-spanning stretches (helical) occupy residues 69–93 (LFEVAHFVPEKPMYEQGLILLPHLA), 134–155 (LLGPETLEESFPFFGYVWKDRN), 178–200 (KALYFGGVYDTWAPGGGDVRKIT), 255–275 (KPFAWARRALVWSGEAYLSYS), and 291–312 (WFNNTAYPSEFYGPTGPEASQA). Residue glutamate 367 participates in [CaMn4O5] cluster binding. A helical membrane pass occupies residues 447-471 (RARAAAAGFEKGIDRDLEPVLFMTP).

It belongs to the PsbB/PsbC family. PsbC subfamily. In terms of assembly, PSII is composed of 1 copy each of membrane proteins PsbA, PsbB, PsbC, PsbD, PsbE, PsbF, PsbH, PsbI, PsbJ, PsbK, PsbL, PsbM, PsbT, PsbX, PsbY, PsbZ, Psb30/Ycf12, at least 3 peripheral proteins of the oxygen-evolving complex and a large number of cofactors. It forms dimeric complexes. The cofactor is Binds multiple chlorophylls and provides some of the ligands for the Ca-4Mn-5O cluster of the oxygen-evolving complex. It may also provide a ligand for a Cl- that is required for oxygen evolution. PSII binds additional chlorophylls, carotenoids and specific lipids..

The protein localises to the plastid. It localises to the chloroplast thylakoid membrane. Its function is as follows. One of the components of the core complex of photosystem II (PSII). It binds chlorophyll and helps catalyze the primary light-induced photochemical processes of PSII. PSII is a light-driven water:plastoquinone oxidoreductase, using light energy to abstract electrons from H(2)O, generating O(2) and a proton gradient subsequently used for ATP formation. In Carica papaya (Papaya), this protein is Photosystem II CP43 reaction center protein.